A 390-amino-acid chain; its full sequence is Alcohol dehydrogenase-like 7 (390 aa).

Residues cysteine 56, serine 58, histidine 78, cysteine 108, cysteine 111, cysteine 114, cysteine 122, and cysteine 187 each coordinate Zn(2+). The an alcohol site is built by serine 58 and histidine 78. Serine 58 contributes to the NAD(+) binding site. NAD(+) is bound by residues 212 to 217 (GLGSIG), aspartate 236, lysine 241, 306 to 308 (LGV), phenylalanine 334, and arginine 384.

It belongs to the zinc-containing alcohol dehydrogenase family. Class-III subfamily. As to quaternary structure, homodimer. The cofactor is Zn(2+).

It is found in the cytoplasm. The catalysed reaction is a primary alcohol + NAD(+) = an aldehyde + NADH + H(+). It catalyses the reaction a secondary alcohol + NAD(+) = a ketone + NADH + H(+). This Arabidopsis thaliana (Mouse-ear cress) protein is Alcohol dehydrogenase-like 7.